A 130-amino-acid chain; its full sequence is Small ribosomal subunit protein uS11 (130 aa).

It belongs to the universal ribosomal protein uS11 family. As to quaternary structure, part of the 30S ribosomal subunit. Interacts with proteins S7 and S18. Binds to IF-3.

In terms of biological role, located on the platform of the 30S subunit, it bridges several disparate RNA helices of the 16S rRNA. Forms part of the Shine-Dalgarno cleft in the 70S ribosome. This is Small ribosomal subunit protein uS11 from Prochlorococcus marinus (strain NATL2A).